The following is a 146-amino-acid chain: Ribonuclease H (146 aa).

The RNase H type-1 domain occupies 1–141 (MKKVQLITDG…CDELATRAAR (141 aa)). 4 residues coordinate Mg(2+): D9, E47, D69, and D133.

It belongs to the RNase H family. In terms of assembly, monomer. It depends on Mg(2+) as a cofactor.

The protein localises to the cytoplasm. The catalysed reaction is Endonucleolytic cleavage to 5'-phosphomonoester.. Its function is as follows. Endonuclease that specifically degrades the RNA of RNA-DNA hybrids. This is Ribonuclease H from Solibacter usitatus (strain Ellin6076).